The sequence spans 296 residues: MTQTSQYDFWVKLASRASVATALTLITIKLLAWLYSGSASMLASLTDSFADTLASIINFIAIRYAIVPADHDHRYGHGKAEPLAALAQSAFIMGSAFLLLFYGGERLLNPSPVENATLGVVVSVVAIVLTLALVLLQKRALAATNSTVVEADSLHYKSDLFLNAAVLLALVLSQYGWWWADGLFAVLIACYIGQQAFDLGYRSIQALLDRELDEDTRQRIKLIAKEDPRVLGLHDLRTRQAGKTVFIQFHLELDGNLSLNEAHSITDTTGLRVKAAFEDAEVIIHQDPVQVEPTTQ.

Residues 1-18 are Cytoplasmic-facing; the sequence is MTQTSQYDFWVKLASRAS. Residues 19–32 traverse the membrane as a helical segment; the sequence is VATALTLITIKLLA. Residues 33–43 are Periplasmic-facing; it reads WLYSGSASMLA. A helical membrane pass occupies residues 44–60; sequence SLTDSFADTLASIINFI. Positions 47, 51, 70, 73, and 77 each coordinate Zn(2+). At 61–83 the chain is on the cytoplasmic side; that stretch reads AIRYAIVPADHDHRYGHGKAEPL. The chain crosses the membrane as a helical span at residues 84 to 105; it reads AALAQSAFIMGSAFLLLFYGGE. At 106–119 the chain is on the periplasmic side; that stretch reads RLLNPSPVENATLG. Residues 120-138 form a helical membrane-spanning segment; sequence VVVSVVAIVLTLALVLLQK. Topologically, residues 139 to 145 are cytoplasmic; that stretch reads RALAATN. Residues 146–160 form a helical membrane-spanning segment; it reads STVVEADSLHYKSDL. His155 and Asp159 together coordinate Zn(2+). The Periplasmic portion of the chain corresponds to 161–180; that stretch reads FLNAAVLLALVLSQYGWWWA. Residues 181–200 traverse the membrane as a helical segment; the sequence is DGLFAVLIACYIGQQAFDLG. The Cytoplasmic portion of the chain corresponds to 201–296; sequence YRSIQALLDR…DPVQVEPTTQ (96 aa). Residues His234, Asp235, His250, His263, His285, and Asp287 each coordinate Zn(2+).

Belongs to the cation diffusion facilitator (CDF) transporter (TC 2.A.4) family. FieF subfamily. As to quaternary structure, homodimer. The subunits are held together in a parallel orientation through zinc binding at the interface of the cytoplasmic domains.

It is found in the cell inner membrane. The catalysed reaction is Zn(2+)(in) + H(+)(out) = Zn(2+)(out) + H(+)(in). It catalyses the reaction Cd(2+)(in) + H(+)(out) = Cd(2+)(out) + H(+)(in). It carries out the reaction Fe(2+)(in) + H(+)(out) = Fe(2+)(out) + H(+)(in). Its activity is regulated as follows. Cytoplasmic zinc binding may trigger movements of two electrically repulsive cytoplasmic domains and reorient transmembrane helices, thereby modulating coordination geometry of the active site for zinc transport. It may modulate activity in response to cytoplasmic metal fluctuations. In terms of biological role, divalent metal cation transporter which exports Zn(2+), Cd(2+) and possibly Fe(2+). Zn(2+)/H(+) antiporter capable of using the proton motive force to remove Zn(2+) from the cytoplasm. May be involved in zinc and iron detoxification by efflux. The sequence is that of Cation-efflux pump FieF from Shewanella oneidensis (strain ATCC 700550 / JCM 31522 / CIP 106686 / LMG 19005 / NCIMB 14063 / MR-1).